The following is a 539-amino-acid chain: O-phosphoserine--tRNA(Cys) ligase (539 aa).

Substrate-binding positions include 188–190 (HMT), 233–235 (SAS), 275–276 (YY), and Asn-319.

The protein belongs to the class-II aminoacyl-tRNA synthetase family. O-phosphoseryl-tRNA(Cys) synthetase subfamily. As to quaternary structure, homotetramer. Interacts with SepCysS.

The enzyme catalyses tRNA(Cys) + O-phospho-L-serine + ATP = O-phospho-L-seryl-tRNA(Cys) + AMP + diphosphate. In terms of biological role, catalyzes the attachment of O-phosphoserine (Sep) to tRNA(Cys). This chain is O-phosphoserine--tRNA(Cys) ligase (sepS), found in Methanocaldococcus jannaschii (strain ATCC 43067 / DSM 2661 / JAL-1 / JCM 10045 / NBRC 100440) (Methanococcus jannaschii).